Consider the following 68-residue polypeptide: Large ribosomal subunit protein uL29 (68 aa).

It belongs to the universal ribosomal protein uL29 family.

The sequence is that of Large ribosomal subunit protein uL29 from Albidiferax ferrireducens (strain ATCC BAA-621 / DSM 15236 / T118) (Rhodoferax ferrireducens).